Consider the following 148-residue polypeptide: Endothelial differentiation-related factor 1 (148 aa).

The residue at position 2 (Ala2) is an N-acetylalanine. The residue at position 4 (Ser4) is a Phosphoserine. Lys25 carries the post-translational modification N6-methyllysine. A disordered region spans residues 34–67 (RGEDVETSKKWAAGQNKQHSITKNTAKLDRETEE). Positions 37 to 113 (DVETSKKWAA…QVIADYESGR (77 aa)) are interaction with NR5A2, PPARG and NR1H3. Residues 48 to 58 (QNKQHSITKNT) show a composition bias toward polar residues. The interval 69-108 (HHDRVTLEVGKVIQRGRQSKGLTQKDLATKINEKPQVIAD) is interaction with TBP and NR5A1. Positions 81-88 (IQRGRQSK) match the IQ motif motif. Residues 81 to 135 (IQRGRQSKGLTQKDLATKINEKPQVIADYESGRAIPNNQVLGKIERAIGLKLRGK) form the HTH cro/C1-type domain. Positions 92-111 (QKDLATKINEKPQVIADYES) form a DNA-binding region, H-T-H motif.

Interacts with TBP and the transcription factor IID (TFIID) complex, NR5A2, NR1H3 and PPARG. Interaction with TBP is regulated by phosphorylation. Binds NR5A1, ATF1, FOS and JUN via their conserved basic region. Binding to calmodulin is regulated by calcium and phosphorylation of the IQ motif. In terms of processing, phosphorylated. As to expression, expressed in brain, liver, kidney and heart (at protein level). Also expressed in testis.

The protein localises to the cytoplasm. Its subcellular location is the nucleus. Functionally, transcriptional coactivator stimulating NR5A1 and ligand-dependent NR1H3/LXRA and PPARG transcriptional activities. Enhances the DNA-binding activity of ATF1, ATF2, CREB1 and NR5A1. Regulates nitric oxid synthase activity probably by sequestering calmodulin in the cytoplasm. Might function in endothelial cells differentiation, hormone-induced cardiomyocytes hypertrophy and lipid metabolism. The polypeptide is Endothelial differentiation-related factor 1 (Edf1) (Mus musculus (Mouse)).